We begin with the raw amino-acid sequence, 524 residues long: Bifunctional purine biosynthesis protein PurH (524 aa).

One can recognise an MGS-like domain in the interval 1–145 (MIKQALLSVS…KNHRDVTVIV (145 aa)).

This sequence belongs to the PurH family.

The enzyme catalyses (6R)-10-formyltetrahydrofolate + 5-amino-1-(5-phospho-beta-D-ribosyl)imidazole-4-carboxamide = 5-formamido-1-(5-phospho-D-ribosyl)imidazole-4-carboxamide + (6S)-5,6,7,8-tetrahydrofolate. It catalyses the reaction IMP + H2O = 5-formamido-1-(5-phospho-D-ribosyl)imidazole-4-carboxamide. The protein operates within purine metabolism; IMP biosynthesis via de novo pathway; 5-formamido-1-(5-phospho-D-ribosyl)imidazole-4-carboxamide from 5-amino-1-(5-phospho-D-ribosyl)imidazole-4-carboxamide (10-formyl THF route): step 1/1. Its pathway is purine metabolism; IMP biosynthesis via de novo pathway; IMP from 5-formamido-1-(5-phospho-D-ribosyl)imidazole-4-carboxamide: step 1/1. The protein is Bifunctional purine biosynthesis protein PurH of Cupriavidus taiwanensis (strain DSM 17343 / BCRC 17206 / CCUG 44338 / CIP 107171 / LMG 19424 / R1) (Ralstonia taiwanensis (strain LMG 19424)).